The sequence spans 148 residues: Large-conductance mechanosensitive channel (148 aa).

2 helical membrane passes run leucine 15–valine 35 and valine 84–leucine 104.

The protein belongs to the MscL family. As to quaternary structure, homopentamer.

The protein localises to the cell inner membrane. In terms of biological role, channel that opens in response to stretch forces in the membrane lipid bilayer. May participate in the regulation of osmotic pressure changes within the cell. The polypeptide is Large-conductance mechanosensitive channel (Nitratidesulfovibrio vulgaris (strain DSM 19637 / Miyazaki F) (Desulfovibrio vulgaris)).